A 69-amino-acid chain; its full sequence is U5-agatoxin-Ao1a (69 aa).

Positions 1–20 are cleaved as a signal peptide; sequence MRTIISLLLLSAMVFAVIEA. The propeptide occupies 21–34; that stretch reads ISLEEGLQLFEGER. Intrachain disulfides connect Cys36-Cys52 and Cys43-Cys57.

This sequence belongs to the neurotoxin 01 (U2-agtx) family. In terms of processing, does not contain a cysteine at position 61 which disrupts the cysteine framework. As to expression, expressed by the venom gland.

The protein localises to the secreted. This Agelena orientalis (Funnel-web spider) protein is U5-agatoxin-Ao1a.